Consider the following 523-residue polypeptide: 2-isopropylmalate synthase (523 aa).

The Pyruvate carboxyltransferase domain maps to valine 5–tryptophan 267. Aspartate 14, histidine 202, histidine 204, and asparagine 238 together coordinate Mn(2+). Residues arginine 392 to valine 523 are regulatory domain.

It belongs to the alpha-IPM synthase/homocitrate synthase family. LeuA type 1 subfamily. Homodimer. Mn(2+) is required as a cofactor.

It is found in the cytoplasm. The enzyme catalyses 3-methyl-2-oxobutanoate + acetyl-CoA + H2O = (2S)-2-isopropylmalate + CoA + H(+). The protein operates within amino-acid biosynthesis; L-leucine biosynthesis; L-leucine from 3-methyl-2-oxobutanoate: step 1/4. Catalyzes the condensation of the acetyl group of acetyl-CoA with 3-methyl-2-oxobutanoate (2-ketoisovalerate) to form 3-carboxy-3-hydroxy-4-methylpentanoate (2-isopropylmalate). This Salmonella typhi protein is 2-isopropylmalate synthase.